Reading from the N-terminus, the 89-residue chain is UPF0223 protein Bcer98_2663 (89 aa).

This sequence belongs to the UPF0223 family.

This is UPF0223 protein Bcer98_2663 from Bacillus cytotoxicus (strain DSM 22905 / CIP 110041 / 391-98 / NVH 391-98).